We begin with the raw amino-acid sequence, 643 residues long: Threonine--tRNA ligase (643 aa).

The region spanning 1 to 61 (MPIITLPDGS…TEDSKLEIIT (61 aa)) is the TGS domain. Positions 243–534 (DHRKIGKALD…ITEEYAGFFP (292 aa)) are catalytic. 3 residues coordinate Zn(2+): Cys-334, His-385, and His-511.

The protein belongs to the class-II aminoacyl-tRNA synthetase family. Homodimer. Zn(2+) is required as a cofactor.

The protein localises to the cytoplasm. It carries out the reaction tRNA(Thr) + L-threonine + ATP = L-threonyl-tRNA(Thr) + AMP + diphosphate + H(+). Catalyzes the attachment of threonine to tRNA(Thr) in a two-step reaction: L-threonine is first activated by ATP to form Thr-AMP and then transferred to the acceptor end of tRNA(Thr). Also edits incorrectly charged L-seryl-tRNA(Thr). This is Threonine--tRNA ligase from Pasteurella multocida (strain Pm70).